The primary structure comprises 72 residues: Mitotic-spindle organizing protein 1 (72 aa).

It belongs to the MOZART1 family. Part of the gamma-tubulin complex.

It is found in the cytoplasm. The protein localises to the cytoskeleton. Its subcellular location is the microtubule organizing center. The protein resides in the centrosome. It localises to the spindle. Required for gamma-tubulin complex recruitment to the centrosome. This chain is Mitotic-spindle organizing protein 1 (mzt1), found in Xenopus tropicalis (Western clawed frog).